The following is a 187-amino-acid chain: Rusticyanin (187 aa).

Positions 1–32 are cleaved as a signal peptide; that stretch reads MYTQNTMKKNWYVTVGAAAALAATVGMGTAMA. Positions 85 to 187 constitute a Plastocyanin-like domain; that stretch reads SFEVHDKKNP…TGMFGKIIVK (103 aa). Cu cation-binding residues include His117, Cys170, His175, and Met180.

As to quaternary structure, monomer. It depends on Cu cation as a cofactor.

The protein localises to the periplasm. Its function is as follows. Electron carrier from cytochrome c552 to the A-type oxidase. The chain is Rusticyanin (rus) from Acidithiobacillus ferridurans.